A 687-amino-acid polypeptide reads, in one-letter code: Pentatricopeptide repeat-containing protein At3g09060 (687 aa).

PPR repeat units follow at residues 42-76 (SAVV…ECKC), 77-107 (DEDV…MREI), 113-147 (AIRS…GVAP), 148-182 (NLQT…GFKP), 183-217 (DVFS…GVAP), 218-253 (DVTC…SVYP), 254-288 (NVKT…EREK), 289-323 (DLYT…KASI), 324-358 (DVVT…NSVN), 359-392 (IVSY…GYAA), 393-427 (DKTT…GGHL), 428-462 (DVYA…GVEL), 463-497 (NSHV…GCRP), 498-532 (TVVS…GWKP), 533-567 (DLKT…GLET), 568-602 (DVMM…NCTA), 603-637 (NLVT…GLQP), and 638-672 (DIIS…GIFP).

It belongs to the PPR family. P subfamily.

This Arabidopsis thaliana (Mouse-ear cress) protein is Pentatricopeptide repeat-containing protein At3g09060.